The chain runs to 405 residues: CMP-sialic acid transporter 3 (405 aa).

The Cytoplasmic segment spans residues 1–39 (MKNGIAECPACHSKLVSPGSKTISRAYDDHKIRVSSKQR). Residues 40-60 (VLNVLLVVGDCMLVGLQPVLV) traverse the membrane as a helical segment. Over 61-73 (YMSKVDGKFNFSP) the chain is Lumenal. A helical transmembrane segment spans residues 74–94 (ISVNFLTEIAKVIFAIVMLLI). Residues 95-142 (QARHQKVGEKPLLSVSTFVQAARNNVLLAVPALLYAINNYLKFTMQLY) are Cytoplasmic-facing. The chain crosses the membrane as a helical span at residues 143-163 (FNPATVKMLSNLKVLVIAVLL). Over 164–170 (KMVMKRR) the chain is Lumenal. The helical transmembrane segment at 171–191 (FSIIQWEALALLLIGISVNQL) threads the bilayer. At 192–199 (RSLPEGAT) the chain is on the cytoplasmic side. Residues 200–220 (AIGIPLATGAYVCTVIFVTVP) form a helical membrane-spanning segment. Over 221-243 (SMASVFNEYALKSQYDTSIYLQN) the chain is Lumenal. Residues 244-264 (LFLYGYGAIFNFLGILGTVIY) traverse the membrane as a helical segment. Residues 265-280 (KGPGSFDILQGHSRAT) are Cytoplasmic-facing. The helical transmembrane segment at 281-301 (MFLILNNAAQGILSSFFFKYA) threads the bilayer. The Lumenal segment spans residues 302–321 (DTILKKYSSTVATIFTGIAS). Residues 322 to 342 (AALFGHVITMNFLLGISIVFI) form a helical membrane-spanning segment. Topologically, residues 343-405 (SMHQFFSPLA…SDDRTPLLPR (63 aa)) are cytoplasmic. Residues 385-405 (GANEEASHRGESDDRTPLLPR) are disordered. Over residues 389–405 (EASHRGESDDRTPLLPR) the composition is skewed to basic and acidic residues.

This sequence belongs to the nucleotide-sugar transporter family. CMP-Sialate:CMP antiporter (TC 2.A.7.12) subfamily.

It localises to the golgi apparatus membrane. Sugar transporter involved in the transport of CMP-sialic acid from the cytoplasm into the Golgi. The sequence is that of CMP-sialic acid transporter 3 (UTR6) from Arabidopsis thaliana (Mouse-ear cress).